The following is a 511-amino-acid chain: Phosphoenolpyruvate carboxylase (511 aa).

This sequence belongs to the PEPCase type 2 family. As to quaternary structure, homotetramer. Requires Mg(2+) as cofactor.

The enzyme catalyses oxaloacetate + phosphate = phosphoenolpyruvate + hydrogencarbonate. Catalyzes the irreversible beta-carboxylation of phosphoenolpyruvate (PEP) to form oxaloacetate (OAA), a four-carbon dicarboxylic acid source for the tricarboxylic acid cycle. The protein is Phosphoenolpyruvate carboxylase of Saccharolobus islandicus (strain L.S.2.15 / Lassen #1) (Sulfolobus islandicus).